A 101-amino-acid chain; its full sequence is Small ribosomal subunit protein uS14 (101 aa).

This sequence belongs to the universal ribosomal protein uS14 family. As to quaternary structure, part of the 30S ribosomal subunit. Contacts proteins S3 and S10.

Its function is as follows. Binds 16S rRNA, required for the assembly of 30S particles and may also be responsible for determining the conformation of the 16S rRNA at the A site. The protein is Small ribosomal subunit protein uS14 of Haemophilus influenzae (strain 86-028NP).